The primary structure comprises 41 residues: Large ribosomal subunit protein bL36 (41 aa).

The protein belongs to the bacterial ribosomal protein bL36 family.

In Stenotrophomonas maltophilia (strain R551-3), this protein is Large ribosomal subunit protein bL36.